A 237-amino-acid chain; its full sequence is Intracellular ribonuclease LX (237 aa).

Positions 1–24 (MMKSQKKLLIKIIVVQCLLVLCVT) are excised as a propeptide. An RNA-binding site is contributed by Q36. An intrachain disulfide couples C42 to C48. RNA-binding positions include H63, F113, 116–117 (HE), and 120–121 (KH). Catalysis depends on H63, which acts as the Proton donor. 3 cysteine pairs are disulfide-bonded: C78–C124, C183–C219, and C199–C210. E117 is an active-site residue. Residue H121 is the Proton acceptor of the active site.

The protein belongs to the RNase T2 family.

The protein resides in the cytoplasm. The catalysed reaction is a ribonucleotidyl-ribonucleotide-RNA + H2O = a 3'-end 3'-phospho-ribonucleotide-RNA + a 5'-end dephospho-ribonucleoside-RNA + H(+). This is Intracellular ribonuclease LX (RNALX) from Solanum lycopersicum (Tomato).